The primary structure comprises 179 residues: Crossover junction endodeoxyribonuclease RuvC (179 aa).

Catalysis depends on residues Asp-12, Glu-72, and Asp-144. Residues Asp-12, Glu-72, and Asp-144 each contribute to the Mg(2+) site.

It belongs to the RuvC family. In terms of assembly, homodimer which binds Holliday junction (HJ) DNA. The HJ becomes 2-fold symmetrical on binding to RuvC with unstacked arms; it has a different conformation from HJ DNA in complex with RuvA. In the full resolvosome a probable DNA-RuvA(4)-RuvB(12)-RuvC(2) complex forms which resolves the HJ. The cofactor is Mg(2+).

It is found in the cytoplasm. The catalysed reaction is Endonucleolytic cleavage at a junction such as a reciprocal single-stranded crossover between two homologous DNA duplexes (Holliday junction).. Its function is as follows. The RuvA-RuvB-RuvC complex processes Holliday junction (HJ) DNA during genetic recombination and DNA repair. Endonuclease that resolves HJ intermediates. Cleaves cruciform DNA by making single-stranded nicks across the HJ at symmetrical positions within the homologous arms, yielding a 5'-phosphate and a 3'-hydroxyl group; requires a central core of homology in the junction. The consensus cleavage sequence is 5'-(A/T)TT(C/G)-3'. Cleavage occurs on the 3'-side of the TT dinucleotide at the point of strand exchange. HJ branch migration catalyzed by RuvA-RuvB allows RuvC to scan DNA until it finds its consensus sequence, where it cleaves and resolves the cruciform DNA. In Dechloromonas aromatica (strain RCB), this protein is Crossover junction endodeoxyribonuclease RuvC.